Consider the following 565-residue polypeptide: Dihydroxy-acid dehydratase (565 aa).

Asp80 provides a ligand contact to Mg(2+). Residue Cys121 participates in [2Fe-2S] cluster binding. Residues Asp122 and Lys123 each contribute to the Mg(2+) site. N6-carboxylysine is present on Lys123. Residue Cys194 participates in [2Fe-2S] cluster binding. Residue Glu447 participates in Mg(2+) binding. Residue Ser473 is the Proton acceptor of the active site.

This sequence belongs to the IlvD/Edd family. As to quaternary structure, homodimer. Requires [2Fe-2S] cluster as cofactor. The cofactor is Mg(2+).

The enzyme catalyses (2R)-2,3-dihydroxy-3-methylbutanoate = 3-methyl-2-oxobutanoate + H2O. The catalysed reaction is (2R,3R)-2,3-dihydroxy-3-methylpentanoate = (S)-3-methyl-2-oxopentanoate + H2O. It participates in amino-acid biosynthesis; L-isoleucine biosynthesis; L-isoleucine from 2-oxobutanoate: step 3/4. The protein operates within amino-acid biosynthesis; L-valine biosynthesis; L-valine from pyruvate: step 3/4. Its function is as follows. Functions in the biosynthesis of branched-chain amino acids. Catalyzes the dehydration of (2R,3R)-2,3-dihydroxy-3-methylpentanoate (2,3-dihydroxy-3-methylvalerate) into 2-oxo-3-methylpentanoate (2-oxo-3-methylvalerate) and of (2R)-2,3-dihydroxy-3-methylbutanoate (2,3-dihydroxyisovalerate) into 2-oxo-3-methylbutanoate (2-oxoisovalerate), the penultimate precursor to L-isoleucine and L-valine, respectively. The chain is Dihydroxy-acid dehydratase from Chlorobium phaeovibrioides (strain DSM 265 / 1930) (Prosthecochloris vibrioformis (strain DSM 265)).